Consider the following 315-residue polypeptide: Cytochrome f (315 aa).

An N-terminal signal peptide occupies residues 1-30 (MRTFLKFSTLVSKGVLVLVCSFFLTASSNA). Heme-binding residues include Tyr31, Cys51, Cys54, and His55. Residues 281–300 (IQGLLVFFLFVLLAQVFLVL) form a helical membrane-spanning segment.

It belongs to the cytochrome f family. In terms of assembly, the 4 large subunits of the cytochrome b6-f complex are cytochrome b6, subunit IV (17 kDa polypeptide, petD), cytochrome f and the Rieske protein, while the 4 small subunits are PetG, PetL, PetM and PetN. The complex functions as a dimer. Heme serves as cofactor.

Its subcellular location is the plastid. The protein localises to the chloroplast thylakoid membrane. Component of the cytochrome b6-f complex, which mediates electron transfer between photosystem II (PSII) and photosystem I (PSI), cyclic electron flow around PSI, and state transitions. The chain is Cytochrome f (petA) from Chlorella vulgaris (Green alga).